A 758-amino-acid polypeptide reads, in one-letter code: 5-methyltetrahydropteroyltriglutamate--homocysteine methyltransferase (758 aa).

Residues 17–20 and K114 contribute to the 5-methyltetrahydropteroyltri-L-glutamate site; that span reads RELK. L-homocysteine contacts are provided by residues 429 to 431 and E482; that span reads IGS. Residues 429–431 and E482 contribute to the L-methionine site; that span reads IGS. 5-methyltetrahydropteroyltri-L-glutamate contacts are provided by residues 513–514 and W559; that span reads RC. An L-homocysteine-binding site is contributed by D597. Position 597 (D597) interacts with L-methionine. E603 contacts 5-methyltetrahydropteroyltri-L-glutamate. H639, C641, and E663 together coordinate Zn(2+). The active-site Proton donor is the H692. Zn(2+) is bound at residue C724.

Belongs to the vitamin-B12 independent methionine synthase family. It depends on Zn(2+) as a cofactor.

It catalyses the reaction 5-methyltetrahydropteroyltri-L-glutamate + L-homocysteine = tetrahydropteroyltri-L-glutamate + L-methionine. The protein operates within amino-acid biosynthesis; L-methionine biosynthesis via de novo pathway; L-methionine from L-homocysteine (MetE route): step 1/1. Its function is as follows. Catalyzes the transfer of a methyl group from 5-methyltetrahydrofolate to homocysteine resulting in methionine formation. This chain is 5-methyltetrahydropteroyltriglutamate--homocysteine methyltransferase, found in Buchnera aphidicola subsp. Acyrthosiphon pisum (strain APS) (Acyrthosiphon pisum symbiotic bacterium).